We begin with the raw amino-acid sequence, 385 residues long: Exopolygalacturonase rpg15 (385 aa).

The signal sequence occupies residues 1-26; it reads MVRFISFTSPIAALLLLSFGVKHAST. 4 N-linked (GlcNAc...) asparagine glycosylation sites follow: N143, N161, N164, and N180. PbH1 repeat units lie at residues 165–195, 196–217, 219–241, and 249–270; these read STNL…DLYH, SSGI…AIKE, VEKV…GSLG, and VKHV…RVKT. Catalysis depends on D210, which acts as the Proton donor. C212 and C229 are disulfide-bonded. A glycan (N-linked (GlcNAc...) asparagine) is linked at N226. H233 is an active-site residue. N256, N319, and N343 each carry an N-linked (GlcNAc...) asparagine glycan. Cysteines 344 and 350 form a disulfide. The stretch at 350–376 is one PbH1 5 repeat; sequence CSDITFSGIDITKASNTTDNVCVYLEG. A glycan (N-linked (GlcNAc...) asparagine) is linked at N365.

It belongs to the glycosyl hydrolase 28 family. Post-translationally, N-glycosylated.

It localises to the secreted. The enzyme catalyses [(1-&gt;4)-alpha-D-galacturonosyl](n) + H2O = alpha-D-galacturonate + [(1-&gt;4)-alpha-D-galacturonosyl](n-1). Specific in hydrolyzing the terminal glycosidic bond of polygalacturonic acid and oligogalacturonates. This Rhizopus delemar (strain RA 99-880 / ATCC MYA-4621 / FGSC 9543 / NRRL 43880) (Mucormycosis agent) protein is Exopolygalacturonase rpg15.